We begin with the raw amino-acid sequence, 1258 residues long: Splicing factor, arginine/serine-rich 19 (1258 aa).

Disordered regions lie at residues 1–32, 159–345, 370–398, 410–1034, 1114–1154, and 1223–1258; these read MEEE…LSPS, KTVS…PRRR, GGPA…EEEP, PRQP…PPPM, GSLP…DKYL, and FRKH…LPPL. The segment covering 7–27 has biased composition (basic and acidic residues); that stretch reads SRGKTEESGEDRGDGPPDRDP. Low complexity predominate over residues 193 to 207; the sequence is SSASSSPSPSPSSSS. A compositionally biased stretch (pro residues) spans 208–223; the sequence is PSPPPPPPPPPPPALP. Positions 228–237 are enriched in basic and acidic residues; sequence DIYDPFHPTD. Residue serine 241 is modified to Phosphoserine. Polar residues predominate over residues 256-266; sequence TGSNPSSSAGT. Over residues 269-283 the composition is skewed to acidic residues; sequence PEEEEEEEEEEEEEG. Residue threonine 329 is modified to Phosphothreonine. A compositionally biased stretch (pro residues) spans 374–383; the sequence is LPLPPLPPTD. Over residues 384-395 the composition is skewed to acidic residues; the sequence is PEIEEGEIVQPE. Positions 414 to 426 are enriched in low complexity; the sequence is PASVATLASVAAP. Phosphoserine is present on residues serine 444 and serine 449. A compositionally biased stretch (basic residues) spans 480 to 491; that stretch reads KILTQRRERYRQ. 4 positions are modified to phosphoserine: serine 493, serine 495, serine 512, and serine 520. Basic residues-rich tracts occupy residues 540–555 and 562–579; these read TARR…RSRS and RGSH…RRRS. Serine 579 and serine 581 each carry phosphoserine. Basic residues predominate over residues 594–613; the sequence is RERHRGKRREGGKKKKKRSR. The span at 614–625 shows a compositional bias: basic and acidic residues; sequence SRAEKRSGDLEK. Threonine 665 bears the Phosphothreonine mark. 2 positions are modified to phosphoserine: serine 678 and serine 684. Tyrosine 691 carries the post-translational modification Phosphotyrosine. Residues serine 693 and serine 697 each carry the phosphoserine modification. Basic and acidic residues-rich tracts occupy residues 698 to 711 and 721 to 743; these read ADER…DRRR and SREK…DRSS. Low complexity-rich tracts occupy residues 752 to 777 and 795 to 806; these read SAPG…SCSS and SSTTPAKDSSSS. A Glycyl lysine isopeptide (Lys-Gly) (interchain with G-Cter in SUMO2) cross-link involves residue lysine 814. Basic and acidic residues predominate over residues 815 to 833; it reads FSRDRESRSPFLKPDERAP. 2 positions are modified to phosphoserine: serine 821 and serine 823. The segment covering 845-877 has biased composition (basic residues); that stretch reads KPKKTKAKAKAGAKKAKGTKGKTKPSKTRKKVR. Serine 878, serine 885, serine 912, and serine 914 each carry phosphoserine. Pro residues predominate over residues 924-937; that stretch reads STPPPKVAPPPPAL. 2 positions are modified to phosphothreonine: threonine 925 and threonine 938. Residues 940-949 are compositionally biased toward polar residues; that stretch reads DSQTVDSSCK. At serine 941 the chain carries Phosphoserine. Threonine 950 carries the phosphothreonine modification. Over residues 971-986 the composition is skewed to acidic residues; the sequence is EEEEEEEEEEEEEEEQ. Residues 987 to 1019 are compositionally biased toward low complexity; the sequence is QPATTTATSTAAAAPSTAPSAGSTAGDSGAEDG. The interval 1133 to 1258 is necessary for interaction with the CTD domain of POLR2A; that stretch reads PASDKREGSS…GGPGLPLPPL (126 aa). Basic and acidic residues predominate over residues 1135 to 1154; sequence SDKREGSSSSEGRGDTDKYL. Over residues 1246–1258 the composition is skewed to pro residues; that stretch reads PDKGGPGLPLPPL.

This sequence belongs to the splicing factor SR family. As to quaternary structure, interacts with POLR2A.

It localises to the nucleus. Its function is as follows. May function in pre-mRNA splicing. In Rattus norvegicus (Rat), this protein is Splicing factor, arginine/serine-rich 19 (Scaf1).